The following is a 116-amino-acid chain: Flagellar transcriptional regulator FlhD (116 aa).

Belongs to the FlhD family. As to quaternary structure, homodimer; disulfide-linked. Forms a heterohexamer composed of two FlhC and four FlhD subunits. Each FlhC binds a FlhD dimer, forming a heterotrimer, and a hexamer assembles by dimerization of two heterotrimers.

It localises to the cytoplasm. Functionally, functions in complex with FlhC as a master transcriptional regulator that regulates transcription of several flagellar and non-flagellar operons by binding to their promoter region. Activates expression of class 2 flagellar genes, including fliA, which is a flagellum-specific sigma factor that turns on the class 3 genes. Also regulates genes whose products function in a variety of physiological pathways. The protein is Flagellar transcriptional regulator FlhD of Salmonella arizonae (strain ATCC BAA-731 / CDC346-86 / RSK2980).